A 602-amino-acid polypeptide reads, in one-letter code: MSTPAMLQLGLFLVVLIALAWPLGAYMTRVMQGENIGPARWCAPLERGFYRLAGIKQEEEMGWRGYAVALILFNVLGVAAVYALQRLQGMLPFNPQAMAAVSPDSSFNTAISFVTNTNWQGYGGETTMSYLTQMLGLTVQNFVSAATGAAVVIALIRGFARHSSAKIGNFWVDVTRMTLYVLLPLAVVFALVFTQQGAIQNLSAYQDVHTVETVKYQQPKQDAKGNPVLGKDGKPVMEDKTSQTQTLPMGPVASQEAIKMLGTNGGGFFNANSAHPFENPTPLANFLQDIAIFLIPAALCFLFGRMVGDRRQGWAILAAMTIMFATAVVVETRAEQAGVPQYSSLGIDQRASQLQSGGNMEGKEARFGIIDTSLFVAVTTSASCGAVNAMHDSLTPIGGLVPMFLMQLGEVVFGGVGSGLYGMLIFAILAVFIAGLMVGRTPEYLGKKIETYEMKMTAITILVTPTLVLALTAIAVSLAAGKAGIANPAAHGFSEILYAFTSAANNNGSAFAGLSANTPFYNIMTGLAMFFGRFFMIVPILAIAGSLAAKKRLAVTGGTLPTHGPLFVTLLIGTVLLVGALNYVPALALGPVVEHLQMLAAR.

Transmembrane regions (helical) follow at residues 5-25 (AMLQLGLFLVVLIALAWPLGA), 65-85 (GYAVALILFNVLGVAAVYALQ), 136-156 (GLTVQNFVSAATGAAVVIALI), and 179-199 (LYVLLPLAVVFALVFTQQGAI). A disordered region spans residues 221–248 (QDAKGNPVLGKDGKPVMEDKTSQTQTLP). Positions 231–241 (KDGKPVMEDKT) are enriched in basic and acidic residues. 6 helical membrane passes run 283 to 303 (LANFLQDIAIFLIPAALCFLF), 312 to 332 (QGWAILAAMTIMFATAVVVET), 419 to 439 (GLYGMLIFAILAVFIAGLMVG), 458 to 478 (AITILVTPTLVLALTAIAVSL), 523 to 543 (IMTGLAMFFGRFFMIVPILAI), and 566 to 586 (LFVTLLIGTVLLVGALNYVPA).

The protein belongs to the KdpA family. In terms of assembly, the system is composed of three essential subunits: KdpA, KdpB and KdpC.

The protein resides in the cell inner membrane. Its function is as follows. Part of the high-affinity ATP-driven potassium transport (or Kdp) system, which catalyzes the hydrolysis of ATP coupled with the electrogenic transport of potassium into the cytoplasm. This subunit binds the periplasmic potassium ions and delivers the ions to the membrane domain of KdpB through an intramembrane tunnel. This chain is Potassium-transporting ATPase potassium-binding subunit, found in Chromobacterium violaceum (strain ATCC 12472 / DSM 30191 / JCM 1249 / CCUG 213 / NBRC 12614 / NCIMB 9131 / NCTC 9757 / MK).